We begin with the raw amino-acid sequence, 513 residues long: Histidine ammonia-lyase (513 aa).

A cross-link (5-imidazolinone (Ala-Gly)) is located at residues 144-146 (ASG). 2,3-didehydroalanine (Ser) is present on S145.

Belongs to the PAL/histidase family. Post-translationally, contains an active site 4-methylidene-imidazol-5-one (MIO), which is formed autocatalytically by cyclization and dehydration of residues Ala-Ser-Gly.

The protein resides in the cytoplasm. The enzyme catalyses L-histidine = trans-urocanate + NH4(+). It participates in amino-acid degradation; L-histidine degradation into L-glutamate; N-formimidoyl-L-glutamate from L-histidine: step 1/3. The chain is Histidine ammonia-lyase from Streptococcus gordonii (strain Challis / ATCC 35105 / BCRC 15272 / CH1 / DL1 / V288).